A 559-amino-acid polypeptide reads, in one-letter code: Urocanate hydratase (559 aa).

NAD(+) is bound by residues 49–50 (GG), Gln-127, 173–175 (GMG), Asp-193, Arg-198, 239–240 (NA), 260–264 (QTSAH), 270–271 (YL), and Tyr-319. The active site involves Cys-407. An NAD(+)-binding site is contributed by Gly-489.

The protein belongs to the urocanase family. NAD(+) serves as cofactor.

The protein resides in the cytoplasm. It catalyses the reaction 4-imidazolone-5-propanoate = trans-urocanate + H2O. It participates in amino-acid degradation; L-histidine degradation into L-glutamate; N-formimidoyl-L-glutamate from L-histidine: step 2/3. Its function is as follows. Catalyzes the conversion of urocanate to 4-imidazolone-5-propionate. The protein is Urocanate hydratase of Shouchella clausii (strain KSM-K16) (Alkalihalobacillus clausii).